Reading from the N-terminus, the 255-residue chain is Hydroxyacylglutathione hydrolase (255 aa).

7 residues coordinate Zn(2+): His55, His57, Asp59, His60, His112, Asp129, and His167.

This sequence belongs to the metallo-beta-lactamase superfamily. Glyoxalase II family. Monomer. It depends on Zn(2+) as a cofactor.

The catalysed reaction is an S-(2-hydroxyacyl)glutathione + H2O = a 2-hydroxy carboxylate + glutathione + H(+). The protein operates within secondary metabolite metabolism; methylglyoxal degradation; (R)-lactate from methylglyoxal: step 2/2. Its function is as follows. Thiolesterase that catalyzes the hydrolysis of S-D-lactoyl-glutathione to form glutathione and D-lactic acid. In Halorhodospira halophila (strain DSM 244 / SL1) (Ectothiorhodospira halophila (strain DSM 244 / SL1)), this protein is Hydroxyacylglutathione hydrolase.